The primary structure comprises 248 residues: PF03932 family protein CutC (248 aa).

This sequence belongs to the CutC family. In terms of assembly, homodimer.

The protein localises to the cytoplasm. In Salmonella typhimurium (strain LT2 / SGSC1412 / ATCC 700720), this protein is PF03932 family protein CutC.